Here is a 134-residue protein sequence, read N- to C-terminus: Small ribosomal subunit protein uS9 (134 aa).

Residues 109–134 are disordered; the sequence is DARRTEPHKPSKSSKGPRAKRQKSYR. Basic residues predominate over residues 118 to 134; it reads PSKSSKGPRAKRQKSYR.

It belongs to the universal ribosomal protein uS9 family.

This is Small ribosomal subunit protein uS9 from Methanococcus maripaludis (strain C7 / ATCC BAA-1331).